A 557-amino-acid polypeptide reads, in one-letter code: Dihydroxy-acid dehydratase (557 aa).

Asp-78 serves as a coordination point for Mg(2+). Cys-119 contacts [2Fe-2S] cluster. Mg(2+) is bound by residues Asp-120 and Lys-121. Position 121 is an N6-carboxylysine (Lys-121). A [2Fe-2S] cluster-binding site is contributed by Cys-192. Glu-442 lines the Mg(2+) pocket. Residue Ser-468 is the Proton acceptor of the active site.

Belongs to the IlvD/Edd family. As to quaternary structure, homodimer. Requires [2Fe-2S] cluster as cofactor. It depends on Mg(2+) as a cofactor.

The enzyme catalyses (2R)-2,3-dihydroxy-3-methylbutanoate = 3-methyl-2-oxobutanoate + H2O. It catalyses the reaction (2R,3R)-2,3-dihydroxy-3-methylpentanoate = (S)-3-methyl-2-oxopentanoate + H2O. Its pathway is amino-acid biosynthesis; L-isoleucine biosynthesis; L-isoleucine from 2-oxobutanoate: step 3/4. The protein operates within amino-acid biosynthesis; L-valine biosynthesis; L-valine from pyruvate: step 3/4. Functions in the biosynthesis of branched-chain amino acids. Catalyzes the dehydration of (2R,3R)-2,3-dihydroxy-3-methylpentanoate (2,3-dihydroxy-3-methylvalerate) into 2-oxo-3-methylpentanoate (2-oxo-3-methylvalerate) and of (2R)-2,3-dihydroxy-3-methylbutanoate (2,3-dihydroxyisovalerate) into 2-oxo-3-methylbutanoate (2-oxoisovalerate), the penultimate precursor to L-isoleucine and L-valine, respectively. The protein is Dihydroxy-acid dehydratase of Bacillus cereus (strain G9842).